The sequence spans 164 residues: uncharacterized protein (164 aa).

The segment covering 1–17 (MNSRVPATQSWFSSHLP) has biased composition (polar residues). Positions 1 to 48 (MNSRVPATQSWFSSHLPTTEPDLEPATAAEGSTTETATLSPETTSFND) are disordered. Residues 24–45 (EPATAAEGSTTETATLSPETTS) are compositionally biased toward low complexity. A helical transmembrane segment spans residues 64–84 (MLLSFGIITVIGLAVAMVLYI). Residues 106–130 (TEEQDELEQELLEHGRDAASMQAAA) adopt a coiled-coil conformation.

It is found in the membrane. This is an uncharacterized protein from Mus musculus (Mouse).